The primary structure comprises 767 residues: Ribonucleoside-diphosphate reductase large subunit (767 aa).

Residues Thr176, 191 to 192 (SC), Gly222, 392 to 396 (NLCAE), and 578 to 582 (PTAGT) contribute to the substrate site. A disulfide bond links Cys192 and Cys408. Asn392 functions as the Proton acceptor in the catalytic mechanism. Catalysis depends on Cys394, which acts as the Cysteine radical intermediate. Glu396 serves as the catalytic Proton acceptor.

The protein belongs to the ribonucleoside diphosphate reductase large chain family. As to quaternary structure, heterotetramer composed of a homodimer of the large subunit (R1) and a homodimer of the small subunit (R2). Larger multisubunit protein complex are also active, composed of (R1)n(R2)n.

It catalyses the reaction a 2'-deoxyribonucleoside 5'-diphosphate + [thioredoxin]-disulfide + H2O = a ribonucleoside 5'-diphosphate + [thioredoxin]-dithiol. In terms of biological role, ribonucleoside-diphosphate reductase holoenzyme provides the precursors necessary for viral DNA synthesis. Allows virus growth in non-dividing cells, as well as reactivation from latency in infected hosts. Catalyzes the biosynthesis of deoxyribonucleotides from the corresponding ribonucleotides. The sequence is that of Ribonucleoside-diphosphate reductase large subunit from Saimiri sciureus (Common squirrel monkey).